A 519-amino-acid polypeptide reads, in one-letter code: Exodeoxyribonuclease 7 large subunit (519 aa).

Residues 500 to 519 (VGRGKTRKPKEEPPAQGSLL) are disordered.

Belongs to the XseA family. As to quaternary structure, heterooligomer composed of large and small subunits.

Its subcellular location is the cytoplasm. It carries out the reaction Exonucleolytic cleavage in either 5'- to 3'- or 3'- to 5'-direction to yield nucleoside 5'-phosphates.. Bidirectionally degrades single-stranded DNA into large acid-insoluble oligonucleotides, which are then degraded further into small acid-soluble oligonucleotides. This chain is Exodeoxyribonuclease 7 large subunit, found in Cereibacter sphaeroides (strain ATCC 17023 / DSM 158 / JCM 6121 / CCUG 31486 / LMG 2827 / NBRC 12203 / NCIMB 8253 / ATH 2.4.1.) (Rhodobacter sphaeroides).